Reading from the N-terminus, the 170-residue chain is Glycine cleavage system H protein, mitochondrial (170 aa).

The N-terminal 47 residues, 1–47 (MLRTTRLWTTRMPTVSKLFLRNSSGNALNKNKLPFLYSSQGPQAVRY), are a transit peptide targeting the mitochondrion. The Lipoyl-binding domain occupies 61-143 (TAFVGITKYA…MGDGWLVKMK (83 aa)). Lys102 carries the N6-lipoyllysine modification.

The protein belongs to the GcvH family. In terms of assembly, component of the glycine decarboxylase complex (GDC), which is composed of four proteins: P, T, L and H. Requires (R)-lipoate as cofactor.

It is found in the mitochondrion. Functionally, the glycine cleavage system (glycine decarboxylase complex) catalyzes the degradation of glycine. The H protein shuttles the methylamine group of glycine from the P protein to the T protein. This Saccharomyces cerevisiae (strain ATCC 204508 / S288c) (Baker's yeast) protein is Glycine cleavage system H protein, mitochondrial (GCV3).